Consider the following 441-residue polypeptide: ATP-dependent protease ATPase subunit HslU (441 aa).

ATP contacts are provided by residues Ile-18, 60–65 (GVGKTE), Asp-254, Glu-319, and Arg-391.

This sequence belongs to the ClpX chaperone family. HslU subfamily. A double ring-shaped homohexamer of HslV is capped on each side by a ring-shaped HslU homohexamer. The assembly of the HslU/HslV complex is dependent on binding of ATP.

It is found in the cytoplasm. Functionally, ATPase subunit of a proteasome-like degradation complex; this subunit has chaperone activity. The binding of ATP and its subsequent hydrolysis by HslU are essential for unfolding of protein substrates subsequently hydrolyzed by HslV. HslU recognizes the N-terminal part of its protein substrates and unfolds these before they are guided to HslV for hydrolysis. The polypeptide is ATP-dependent protease ATPase subunit HslU (Shewanella piezotolerans (strain WP3 / JCM 13877)).